Consider the following 455-residue polypeptide: L-serine dehydratase (455 aa).

Belongs to the iron-sulfur dependent L-serine dehydratase family. It depends on [4Fe-4S] cluster as a cofactor.

The enzyme catalyses L-serine = pyruvate + NH4(+). The protein operates within carbohydrate biosynthesis; gluconeogenesis. This is L-serine dehydratase (sdaA) from Streptomyces coelicolor (strain ATCC BAA-471 / A3(2) / M145).